Consider the following 273-residue polypeptide: Dermonecrotic toxin LruSicTox-alphaIC1d (273 aa).

The active site involves His-5. Positions 25 and 27 each coordinate Mg(2+). Catalysis depends on His-41, which acts as the Nucleophile. Cystine bridges form between Cys-45–Cys-51 and Cys-47–Cys-190. Position 85 (Asp-85) interacts with Mg(2+).

This sequence belongs to the arthropod phospholipase D family. Class II subfamily. Mg(2+) is required as a cofactor. As to expression, expressed by the venom gland.

The protein localises to the secreted. The enzyme catalyses an N-(acyl)-sphingosylphosphocholine = an N-(acyl)-sphingosyl-1,3-cyclic phosphate + choline. It carries out the reaction an N-(acyl)-sphingosylphosphoethanolamine = an N-(acyl)-sphingosyl-1,3-cyclic phosphate + ethanolamine. It catalyses the reaction a 1-acyl-sn-glycero-3-phosphocholine = a 1-acyl-sn-glycero-2,3-cyclic phosphate + choline. The catalysed reaction is a 1-acyl-sn-glycero-3-phosphoethanolamine = a 1-acyl-sn-glycero-2,3-cyclic phosphate + ethanolamine. In terms of biological role, dermonecrotic toxins cleave the phosphodiester linkage between the phosphate and headgroup of certain phospholipids (sphingolipid and lysolipid substrates), forming an alcohol (often choline) and a cyclic phosphate. This toxin acts on sphingomyelin (SM). It may also act on ceramide phosphoethanolamine (CPE), lysophosphatidylcholine (LPC) and lysophosphatidylethanolamine (LPE), but not on lysophosphatidylserine (LPS), and lysophosphatidylglycerol (LPG). It acts by transphosphatidylation, releasing exclusively cyclic phosphate products as second products. Induces dermonecrosis, hemolysis, increased vascular permeability, edema, inflammatory response, and platelet aggregation. This is Dermonecrotic toxin LruSicTox-alphaIC1d from Loxosceles rufescens (Mediterranean recluse spider).